Consider the following 1128-residue polypeptide: Nck-associated protein 1 (1128 aa).

The tract at residues 640-665 is disordered; sequence AVNKKSKKQTGKKGEPEREKPGVESM. Basic and acidic residues predominate over residues 651 to 665; it reads KKGEPEREKPGVESM. A helical transmembrane segment spans residues 995-1015; it reads IACLLMVFVAVSMPTLASNVM.

Belongs to the HEM-1/HEM-2 family.

It localises to the cell membrane. It is found in the cell projection. Its subcellular location is the lamellipodium membrane. Part of the WAVE complex that regulates lamellipodia formation. The WAVE complex regulates actin filament reorganization via its interaction with the Arp2/3 complex. Actin remodeling activity is regulated by RAC1. Plays a role in neural tube closure. The chain is Nck-associated protein 1 (nckap1) from Danio rerio (Zebrafish).